A 635-amino-acid chain; its full sequence is Biosynthetic arginine decarboxylase (635 aa).

N6-(pyridoxal phosphate)lysine is present on Lys-100. A substrate-binding site is contributed by 282–292 (LDIGGGLGVDY).

It belongs to the Orn/Lys/Arg decarboxylase class-II family. SpeA subfamily. Mg(2+) serves as cofactor. Pyridoxal 5'-phosphate is required as a cofactor.

The enzyme catalyses L-arginine + H(+) = agmatine + CO2. It participates in amine and polyamine biosynthesis; agmatine biosynthesis; agmatine from L-arginine: step 1/1. In terms of biological role, catalyzes the biosynthesis of agmatine from arginine. The polypeptide is Biosynthetic arginine decarboxylase (Geotalea uraniireducens (strain Rf4) (Geobacter uraniireducens)).